A 337-amino-acid polypeptide reads, in one-letter code: Calcium-binding protein 39-like (337 aa).

Belongs to the Mo25 family. In terms of assembly, component of a trimeric complex composed of STK11/LKB1, STRAD (STRADA or STRADB) and CAB39/MO25 (CAB39/MO25alpha or CAB39L/MO25beta): the complex tethers STK11/LKB1 in the cytoplasm and stimulates its catalytic activity.

Its function is as follows. Component of a complex that binds and activates STK11/LKB1. In the complex, required to stabilize the interaction between CAB39/MO25 (CAB39/MO25alpha or CAB39L/MO25beta) and STK11/LKB1. In Mus musculus (Mouse), this protein is Calcium-binding protein 39-like (Cab39l).